Reading from the N-terminus, the 727-residue chain is Phenylalanine ammonia-lyase str11 (727 aa).

Y105 acts as the Proton donor/acceptor in catalysis. The segment at residues 210–212 (ASG) is a cross-link (5-imidazolinone (Ala-Gly)). At S211 the chain carries 2,3-didehydroalanine (Ser). N271, Q361, R367, N397, K468, E496, and N499 together coordinate (E)-cinnamate.

It belongs to the PAL/histidase family. In terms of processing, contains an active site 4-methylidene-imidazol-5-one (MIO), which is formed autocatalytically by cyclization and dehydration of residues Ala-Ser-Gly.

It carries out the reaction L-phenylalanine = (E)-cinnamate + NH4(+). The protein operates within mycotoxin biosynthesis. In terms of biological role, phenylalanine ammonia-lyase; part of the gene cluster that mediates the biosynthesis of strobilurin A, an antifungal polyketide that contains a key beta-methoxyacrylate toxophore that targets the complex III of the mitochondrial electron transport chain. Strobilurin biosynthesis begins with construction of benzoyl CoA by step-wise elimination of ammonia from phenylalanine by the phenylalanine ammonia-lyase str11, oxygenation by str8 and retro-Claisen reaction to form benzoic acid, which is activated to its CoA thiolester benzoyl CoA by the dedicated CoA ligase str10. Benzoyl CoA forms the starter unit for the highly reducing polyketide synthase stpks1 that produces the polyketide prestrobilutin A. The FAD-dependent oxygenase str9 then catalyzes the key oxidative rearrangement responsible for the creation of the beta-methoxyacrylate toxophore. Str9 performs epoxidation of the 2,3 olefin of prestrobilutin A, followed by Meinwald rearrangement to furnish the aldehyde intermediate. Rapid enolization of the aldehyde intermediate would give the beta-methoxyacrylate skeleton and methylations catalyzed by str2 and str3 complete the synthesis and lead to the production of strobilurin A. The short-chain dehydrogenase stl2 and the dehydrogenase str4 play a role in the shunt pathway leading to the production of bolineol. The cluster encodes no obvious halogenase gene that could be involved in production of strobilurin B, nor any obvious dimethylallyl-transferase that could be involved in the production of strobilurin G. It is possible that unknown proteins encoded in, or near, the cluster (such as str1 or stl1) may form new classes of halogenases or dimethylally-transferases, or that the responsible genes are located elsewhere on the genome. Similarly, proteins encoded by str5/str6 hydrolases appear to have no chemical role in the biosynthesis of strobilurin A. Finally, no obvious self-resistance gene is found within the cluster. The polypeptide is Phenylalanine ammonia-lyase str11 (Strobilurus tenacellus).